The chain runs to 61 residues: Small ribosomal subunit protein uS14 (61 aa).

Positions 24, 27, 40, and 43 each coordinate Zn(2+).

This sequence belongs to the universal ribosomal protein uS14 family. Zinc-binding uS14 subfamily. Part of the 30S ribosomal subunit. Contacts proteins S3 and S10. It depends on Zn(2+) as a cofactor.

Functionally, binds 16S rRNA, required for the assembly of 30S particles and may also be responsible for determining the conformation of the 16S rRNA at the A site. This chain is Small ribosomal subunit protein uS14, found in Clostridium novyi (strain NT).